A 1489-amino-acid chain; its full sequence is WD repeat-containing protein 7 (1489 aa).

WD repeat units follow at residues 17-56 (APTH…EVNP), 62-104 (GHTA…CIEF), 156-199 (ISPD…SGMQ), 324-366 (VICP…EKQE), 404-443 (NEPL…IVQL), 462-507 (GHRN…MKHI), and 558-597 (RHLF…LDRC). Disordered stretches follow at residues 754–783 (IKEH…YRAS) and 911–947 (GDHM…QGQI). Positions 767 to 782 (EARRQSREDSDPEYRA) are enriched in basic and acidic residues. Ser-935 is subject to Phosphoserine. WD repeat units follow at residues 1350-1389 (PAIC…CQTI) and 1391-1431 (GHKG…LGSI). Ser-1455 is modified (phosphoserine).

The sequence is that of WD repeat-containing protein 7 (Wdr7) from Mus musculus (Mouse).